Here is a 1060-residue protein sequence, read N- to C-terminus: Bumetanide-sensitive sodium-(potassium)-chloride cotransporter (1060 aa).

Residues 1-122 (MNDENRFNVS…KSPTPAVGIK (122 aa)) are Cytoplasmic-facing. The next 2 helical transmembrane spans lie at 123–143 (LGWI…VMLF) and 154–174 (GIGL…ITTL). The Cytoplasmic portion of the chain corresponds to 175–197 (SMSAICTNGEVKGGGIYYIISRS). 2 consecutive transmembrane segments (helical) span residues 198–218 (LGPE…AVAA) and 250–270 (IVGT…MDWE). Residues 271 to 275 (SKAQN) lie on the Cytoplasmic side of the membrane. The next 2 membrane-spanning stretches (helical) occupy residues 276–296 (FLIA…IMGP) and 332–352 (FFSV…GANI). Residues 353–367 (SGDLKDPASAIPKGT) lie on the Cytoplasmic side of the membrane. The chain crosses the membrane as a helical span at residues 368 to 388 (LLALLISMVSYTLMVLFAGGG). Residues asparagine 396, asparagine 404, and asparagine 419 are each glycosylated (N-linked (GlcNAc...) asparagine). Residues 432-452 (VMQLMSAWGPFIYGGCWAATL) form a helical membrane-spanning segment. Topologically, residues 453-497 (STALTNLLSVPRLIQALGVDRIYPGLIFFSKPYGRHGEPYRGYVL) are cytoplasmic. Helical transmembrane passes span 498 to 518 (TFFV…APLI) and 563 to 583 (CVAI…AIFF). Over 584 to 642 (TLYLIVHYRRPDVNWGSSTQAQMYKTALSSAHALARTGEHVKNYWPQLLVLAGRPQARP) the chain is Cytoplasmic. A helical transmembrane segment spans residues 643-663 (ALVDLGNLISKAGSLMIVGDI). Asparagine 816 is a glycosylation site (N-linked (GlcNAc...) asparagine). The helical transmembrane segment at 882–902 (TLDVWWLYDDGGLTILLPYII) threads the bilayer. The Cytoplasmic segment spans residues 903–1060 (SQRSAWANCK…NHTSVLTFYS (158 aa)).

This sequence belongs to the SLC12A transporter family.

Its subcellular location is the membrane. In terms of biological role, electrically silent transporter system. Mediates sodium and chloride reabsorption. Plays a vital role in the regulation of ionic balance and cell volume. This Manduca sexta (Tobacco hawkmoth) protein is Bumetanide-sensitive sodium-(potassium)-chloride cotransporter.